Reading from the N-terminus, the 325-residue chain is DNA repair and recombination protein RadA (325 aa).

107–114 (GEFGSGKT) is a binding site for ATP.

It belongs to the eukaryotic RecA-like protein family.

Functionally, involved in DNA repair and in homologous recombination. Binds and assemble on single-stranded DNA to form a nucleoprotein filament. Hydrolyzes ATP in a ssDNA-dependent manner and promotes DNA strand exchange between homologous DNA molecules. This is DNA repair and recombination protein RadA from Methanosarcina barkeri (strain Fusaro / DSM 804).